The chain runs to 198 residues: Holliday junction branch migration complex subunit RuvA (198 aa).

The tract at residues 1-63 is domain I; sequence MYSYIIGVIT…EDASILYGFS (63 aa). Residues 64–142 are domain II; sequence SQKERELFNL…KDFVPSEKPV (79 aa). Residues 143 to 153 are flexible linker; it reads NKEVKRSNDSE. The domain III stretch occupies residues 153-198; the sequence is EFAREALLQLGYFKNDVDAFIENTDISGLSIEDIMKKAMKSLDSSR.

Belongs to the RuvA family. As to quaternary structure, homotetramer. Forms an RuvA(8)-RuvB(12)-Holliday junction (HJ) complex. HJ DNA is sandwiched between 2 RuvA tetramers; dsDNA enters through RuvA and exits via RuvB. An RuvB hexamer assembles on each DNA strand where it exits the tetramer. Each RuvB hexamer is contacted by two RuvA subunits (via domain III) on 2 adjacent RuvB subunits; this complex drives branch migration. In the full resolvosome a probable DNA-RuvA(4)-RuvB(12)-RuvC(2) complex forms which resolves the HJ.

The protein resides in the cytoplasm. Its function is as follows. The RuvA-RuvB-RuvC complex processes Holliday junction (HJ) DNA during genetic recombination and DNA repair, while the RuvA-RuvB complex plays an important role in the rescue of blocked DNA replication forks via replication fork reversal (RFR). RuvA specifically binds to HJ cruciform DNA, conferring on it an open structure. The RuvB hexamer acts as an ATP-dependent pump, pulling dsDNA into and through the RuvAB complex. HJ branch migration allows RuvC to scan DNA until it finds its consensus sequence, where it cleaves and resolves the cruciform DNA. The sequence is that of Holliday junction branch migration complex subunit RuvA from Finegoldia magna (strain ATCC 29328 / DSM 20472 / WAL 2508) (Peptostreptococcus magnus).